A 309-amino-acid polypeptide reads, in one-letter code: Taste receptor type 2 member 45 (309 aa).

Position 1 (Met1) is a topological domain, extracellular. A helical transmembrane segment spans residues 2–22; it reads ITFLPIIFSILVVVTFVIGNF. Residues 23–55 lie on the Cytoplasmic side of the membrane; the sequence is ANGFIALVNSTEWVKRQKISFADQIVTALAVSR. A helical membrane pass occupies residues 56-76; that stretch reads VGLLWVLLLNWYSTVLNPAFY. The Extracellular portion of the chain corresponds to 77 to 98; it reads SVELRTTAYNIWAVTGHFSNWL. A helical transmembrane segment spans residues 99 to 119; the sequence is ATSLSIFYLLKIANFSNLIFL. The Cytoplasmic segment spans residues 120-126; sequence HLKRRVK. Residues 127-147 traverse the membrane as a helical segment; sequence SVILVMLLGPLLFLACHLFVV. The Extracellular portion of the chain corresponds to 148-178; the sequence is NMNQIVWTKEYEGNMTWKIKLRRAMYLSDTT. Asn161 is a glycosylation site (N-linked (GlcNAc...) asparagine). The helical transmembrane segment at 179-199 threads the bilayer; it reads VTMLANLVPFTVTLISFLLLV. Over 200 to 229 the chain is Cytoplasmic; sequence CSLCEHLKKMQLHGKGSQDPSTKVHIKALQ. A helical membrane pass occupies residues 230–250; that stretch reads TVISFLLLCAIYFVSVIISVW. Topologically, residues 251 to 259 are extracellular; that stretch reads SFKNLENKP. Residues 260–280 traverse the membrane as a helical segment; it reads VFMFCQAIGFSCSSAHPFILI. The Cytoplasmic segment spans residues 281 to 309; the sequence is WGNKKLKQPFLSVLWQMRYWVKGEKPSSS.

The protein belongs to the G-protein coupled receptor T2R family.

It localises to the membrane. Its function is as follows. Receptor that may play a role in the perception of bitterness and is gustducin-linked. May play a role in sensing the chemical composition of the gastrointestinal content. The activity of this receptor may stimulate alpha gustducin, mediate PLC-beta-2 activation and lead to the gating of TRPM5. This chain is Taste receptor type 2 member 45 (TAS2R45), found in Pan paniscus (Pygmy chimpanzee).